The chain runs to 784 residues: Endonuclease MutS2 (784 aa).

Residue 335 to 342 coordinates ATP; the sequence is GPNTGGKT. The tract at residues 527–546 is disordered; that stretch reads ERSKKQAEEDEARAHSAREE. The Smr domain occupies 709-784; it reads LDLRGERYED…GTGVTVVELK (76 aa).

This sequence belongs to the DNA mismatch repair MutS family. MutS2 subfamily. Homodimer. Binds to stalled ribosomes, contacting rRNA.

Functionally, endonuclease that is involved in the suppression of homologous recombination and thus may have a key role in the control of bacterial genetic diversity. Acts as a ribosome collision sensor, splitting the ribosome into its 2 subunits. Detects stalled/collided 70S ribosomes which it binds and splits by an ATP-hydrolysis driven conformational change. Acts upstream of the ribosome quality control system (RQC), a ribosome-associated complex that mediates the extraction of incompletely synthesized nascent chains from stalled ribosomes and their subsequent degradation. Probably generates substrates for RQC. The chain is Endonuclease MutS2 from Geobacillus thermodenitrificans (strain NG80-2).